A 475-amino-acid polypeptide reads, in one-letter code: Nucleoporin-like protein amo1 (475 aa).

Residues Met-1–Pro-25 form a C3H1-type zinc finger. The segment covering Asp-165–Thr-182 has biased composition (polar residues). 2 disordered regions span residues Asp-165–Gly-208 and Asn-220–Gly-252. The segment covering Gln-183 to Asn-204 has biased composition (low complexity). Polar residues predominate over residues Asn-220–Asn-242. The segment covering Pro-243–Gly-252 has biased composition (low complexity).

It localises to the nucleus. Functionally, involved in the cell polarity process where it is required for the correct termination of microtubule growth at the cell ends during interphase. This chain is Nucleoporin-like protein amo1 (amo1), found in Schizosaccharomyces pombe (strain 972 / ATCC 24843) (Fission yeast).